Reading from the N-terminus, the 71-residue chain is MEAGAYLNAIIFVLVATIIAVISVGLTQTEPCTIRITGESITVHACHLDSETIKALATLKPLSLERLSFHQ.

Residues 1–3 lie on the Lumenal side of the membrane; it reads MEA. The chain crosses the membrane as a helical span at residues 4–26; the sequence is GAYLNAIIFVLVATIIAVISVGL. At 27–71 the chain is on the cytoplasmic side; sequence TQTEPCTIRITGESITVHACHLDSETIKALATLKPLSLERLSFHQ.

The protein belongs to the Tymovirales TGBp3 protein family.

It is found in the host endoplasmic reticulum membrane. In terms of biological role, plays a role in viral cell-to-cell propagation, by facilitating genome transport to neighboring plant cells through plasmosdesmata. May induce the formation of granular vesicles derived from the Endoplasmic reticulum, which align on actin filaments. The sequence is that of Movement protein TGBp3 from Brassica campestris (Field mustard).